The sequence spans 548 residues: Fumarate hydratase class I, aerobic (548 aa).

[4Fe-4S] cluster is bound by residues C105, C224, and C318.

Belongs to the class-I fumarase family. As to quaternary structure, homodimer. [4Fe-4S] cluster is required as a cofactor.

It carries out the reaction (S)-malate = fumarate + H2O. The catalysed reaction is oxaloacetate = enol-oxaloacetate. Its pathway is carbohydrate metabolism; tricarboxylic acid cycle; (S)-malate from fumarate: step 1/1. Catalyzes the reversible hydration of fumarate to (S)-malate. Functions as an aerobic enzyme in the direction of malate formation as part of the citric acid cycle. Accounts for about 80% of the fumarase activity when the bacteria grow aerobically. To a lesser extent, also displays D-tartrate dehydratase activity in vitro, but is not able to convert (R)-malate, L-tartrate or meso-tartrate. Can also catalyze the isomerization of enol- to keto-oxaloacetate. The chain is Fumarate hydratase class I, aerobic from Escherichia coli O6:H1 (strain CFT073 / ATCC 700928 / UPEC).